A 208-amino-acid chain; its full sequence is High frequency lysogenization protein HflD homolog (208 aa).

This sequence belongs to the HflD family.

The protein localises to the cytoplasm. It localises to the cell inner membrane. This chain is High frequency lysogenization protein HflD homolog, found in Yersinia pestis bv. Antiqua (strain Nepal516).